We begin with the raw amino-acid sequence, 304 residues long: uncharacterized protein (304 aa).

The span at 226 to 244 shows a compositional bias: polar residues; that stretch reads SRNSESSRQSNLNSPNDSV. The interval 226–263 is disordered; it reads SRNSESSRQSNLNSPNDSVKFNEFNKSNKSTKTNPNNI. Positions 246–262 are enriched in low complexity; sequence FNEFNKSNKSTKTNPNN.

This is an uncharacterized protein from Acanthamoeba polyphaga (Amoeba).